The following is a 350-amino-acid chain: MEVRHNWTVAEVQTLMDKPFMDLIFEAQLVHRKYQQANHVQVSTLLSIKTGACPEDCKYCPQSAHYRTDVDRERLMEVESVLDAAKKAKNSGSTRFCMGAAWKNPKERDMPYLLDMIKGVKEMGLETCMTLGMITAEQAGELSEAGLDYYNHNLDTSPEFYGNIITTRTYQDRLDTLSHVRDAGMKICSGGIIGMGESASDRAGLFVELANLPQHPESVPVNMLVKVKGTPLEDAEDVDPFDFIRLIAVARIMMPESAVRLSAGRESMNEQMQALCFMAGANSVFYGCKLLTTPNPDEDTDMQLFKKLGVNSEQVAQKPDQIQEHELLDRVAERVAARPNKDDLFYEASV.

The region spanning 38-256 is the Radical SAM core domain; that stretch reads NHVQVSTLLS…IAVARIMMPE (219 aa). The [4Fe-4S] cluster site is built by Cys-53, Cys-57, and Cys-60. Residues Cys-97, Cys-128, Cys-188, and Arg-260 each coordinate [2Fe-2S] cluster.

It belongs to the radical SAM superfamily. Biotin synthase family. Homodimer. Requires [4Fe-4S] cluster as cofactor. [2Fe-2S] cluster serves as cofactor.

The catalysed reaction is (4R,5S)-dethiobiotin + (sulfur carrier)-SH + 2 reduced [2Fe-2S]-[ferredoxin] + 2 S-adenosyl-L-methionine = (sulfur carrier)-H + biotin + 2 5'-deoxyadenosine + 2 L-methionine + 2 oxidized [2Fe-2S]-[ferredoxin]. It functions in the pathway cofactor biosynthesis; biotin biosynthesis; biotin from 7,8-diaminononanoate: step 2/2. In terms of biological role, catalyzes the conversion of dethiobiotin (DTB) to biotin by the insertion of a sulfur atom into dethiobiotin via a radical-based mechanism. The polypeptide is Biotin synthase (Aliivibrio fischeri (strain MJ11) (Vibrio fischeri)).